The chain runs to 468 residues: 6-phosphogluconate dehydrogenase, decarboxylating (468 aa).

Residues 9–14 (GLAVMG), 32–34 (NRS), 73–75 (VKA), and asparagine 101 each bind NADP(+). Residues asparagine 101 and 127–129 (SGG) contribute to the substrate site. Lysine 182 (proton acceptor) is an active-site residue. 185–186 (HN) lines the substrate pocket. Glutamate 189 serves as the catalytic Proton donor. The substrate site is built by tyrosine 190, lysine 259, arginine 286, arginine 444, and histidine 450.

Belongs to the 6-phosphogluconate dehydrogenase family. As to quaternary structure, homodimer.

It carries out the reaction 6-phospho-D-gluconate + NADP(+) = D-ribulose 5-phosphate + CO2 + NADPH. The protein operates within carbohydrate degradation; pentose phosphate pathway; D-ribulose 5-phosphate from D-glucose 6-phosphate (oxidative stage): step 3/3. Catalyzes the oxidative decarboxylation of 6-phosphogluconate to ribulose 5-phosphate and CO(2), with concomitant reduction of NADP to NADPH. The polypeptide is 6-phosphogluconate dehydrogenase, decarboxylating (gnd) (Staphylococcus epidermidis (strain ATCC 35984 / DSM 28319 / BCRC 17069 / CCUG 31568 / BM 3577 / RP62A)).